A 454-amino-acid polypeptide reads, in one-letter code: Repulsive guidance molecule A (454 aa).

The first 47 residues, 1-47, serve as a signal peptide directing secretion; sequence MQPPRERLVVTGRAGWMGMGRGAGRSALGLWPTLAFLLCSFPAAISP. The propeptide at 48 to 169 is removed in mature form; it reads CKILKCNSEF…NYTHCGLFGD (122 aa). Positions 114–126 are enriched in polar residues; that stretch reads HNCSKDGPTSQPR. The disordered stretch occupies residues 114–141; it reads HNCSKDGPTSQPRVRTLPPAGDSQERSD. Residues Asn115 and Asn160 are each glycosylated (N-linked (GlcNAc...) asparagine). 2 disulfides stabilise this stretch: Cys146/Cys227 and Cys164/Cys316. N-linked (GlcNAc...) asparagine glycosylation is present at Asn388. Residue Ala427 is the site of GPI-anchor amidated alanine attachment. Residues 428–454 constitute a propeptide, removed in mature form; it reads AAATTFPLAPQILLGTIPLLVLLPVLW.

The protein belongs to the repulsive guidance molecule (RGM) family. As to quaternary structure, interacts with NEO1, BMP2 and BMP4. Autocatalytically cleaved at low pH; the two chains remain linked via two disulfide bonds. Expressed in gradient in periventricular layers of the developing nervous system. In adult, expressed in scattered cells throughout the brain.

It localises to the cell membrane. In terms of biological role, member of the repulsive guidance molecule (RGM) family that performs several functions in the developing and adult nervous system. Regulates cephalic neural tube closure, inhibits neurite outgrowth and cortical neuron branching, and the formation of mature synapses. Binding to its receptor NEO1/neogenin induces activation of RHOA-ROCK1/Rho-kinase signaling pathway through UNC5B-ARHGEF12/LARG-PTK2/FAK1 cascade, leading to collapse of the neuronal growth cone and neurite outgrowth inhibition. Furthermore, RGMA binding to NEO1/neogenin leads to HRAS inactivation by influencing HRAS-PTK2/FAK1-AKT1 pathway. It also functions as a bone morphogenetic protein (BMP) coreceptor that may signal through SMAD1, SMAD5, and SMAD8. This is Repulsive guidance molecule A (Rgma) from Mus musculus (Mouse).